A 238-amino-acid polypeptide reads, in one-letter code: uncharacterized protein (238 aa).

The protein belongs to the HyuE racemase family.

This is an uncharacterized protein from Schizosaccharomyces pombe (strain 972 / ATCC 24843) (Fission yeast).